A 37-amino-acid polypeptide reads, in one-letter code: ATP synthase subunit O, mitochondrial (37 aa).

The protein belongs to the ATPase delta chain family. As to quaternary structure, F-type ATPases have 2 components, CF(1) - the catalytic core - and CF(0) - the membrane proton channel. CF(1) has five subunits: alpha(3), beta(3), gamma(1), delta(1), epsilon(1). CF(0) has three main subunits: a, b and c.

The protein localises to the mitochondrion. Its subcellular location is the mitochondrion inner membrane. In terms of biological role, mitochondrial membrane ATP synthase (F(1)F(0) ATP synthase or Complex V) produces ATP from ADP in the presence of a proton gradient across the membrane which is generated by electron transport complexes of the respiratory chain. F-type ATPases consist of two structural domains, F(1) - containing the extramembraneous catalytic core and F(0) - containing the membrane proton channel, linked together by a central stalk and a peripheral stalk. During catalysis, ATP synthesis in the catalytic domain of F(1) is coupled via a rotary mechanism of the central stalk subunits to proton translocation. Part of the complex F(0) domain and the peripheric stalk, which acts as a stator to hold the catalytic alpha(3)beta(3) subcomplex and subunit a/ATP6 static relative to the rotary elements. This Solanum tuberosum (Potato) protein is ATP synthase subunit O, mitochondrial.